The primary structure comprises 83 residues: Molybdopterin synthase sulfur carrier subunit (83 aa).

Glycine 83 carries the post-translational modification 1-thioglycine; alternate. Glycyl adenylate; alternate is present on glycine 83.

It belongs to the MoaD family. MOCS2A subfamily. Heterotetramer; composed of 2 small (MOCS2A) and 2 large (MOCS2B) subunits. In terms of processing, C-terminal thiocarboxylation occurs in 2 steps, it is first acyl-adenylated (-COAMP) via the hesA/moeB/thiF part of MOCS3, then thiocarboxylated (-COSH) via the rhodanese domain of MOCS3.

The protein resides in the cytoplasm. The protein operates within cofactor biosynthesis; molybdopterin biosynthesis. Its function is as follows. Acts as a sulfur carrier required for molybdopterin biosynthesis. Component of the molybdopterin synthase complex that catalyzes the conversion of precursor Z into molybdopterin by mediating the incorporation of 2 sulfur atoms into precursor Z to generate a dithiolene group. In the complex, serves as sulfur donor by being thiocarboxylated (-COSH) at its C-terminus by MOCS3. After interaction with MOCS2B, the sulfur is then transferred to precursor Z to form molybdopterin. The chain is Molybdopterin synthase sulfur carrier subunit from Chlamydomonas reinhardtii (Chlamydomonas smithii).